Here is a 383-residue protein sequence, read N- to C-terminus: MAPSSSSCHDAAASMLLCAEDNSSILWLEDEEGEVGERRSGGCRSMVGDLAAGGGGGSGGGGVEEEEDMFPRQSEECVASLVEREQAHMPRADYGERLRGGGGDVDLRVRSEAIGWIWEVYTYYNFSSVTAYLAVNYLDRFLSQYELPEGRDWMTQLLSVACLSIAAKMEETVVPQCLDLQIGEPRFLFEVETIHRMELLVLTNLNWRMQAVTPFSYIDYFLRKLNSGNAAPRSWLLRSSELILRIAAGTGFLEFRPSEIAAAVAATVAGEATGVVEEDIAEAFTHVDKGRVLQCQEAIQDHHYSMATINTVQPKPASTRRGSASASSSSVPESPVAVLDAGCLSYKSDDTDAATIASHGGGRRKSCFDSSPVTSKKRRKLSR.

The span at 51–62 (AAGGGGGSGGGG) shows a compositional bias: gly residues. 3 disordered regions span residues 51–70 (AAGG…EDMF), 313–335 (QPKP…PESP), and 354–383 (ATIA…KLSR). Low complexity predominate over residues 323–335 (SASASSSSVPESP).

The protein belongs to the cyclin family. Cyclin D subfamily.

The polypeptide is Cyclin-D4-2 (CYCD4-2) (Oryza sativa subsp. japonica (Rice)).